Consider the following 431-residue polypeptide: Enolase (431 aa).

Glutamine 166 contacts (2R)-2-phosphoglycerate. Catalysis depends on glutamate 208, which acts as the Proton donor. Positions 245, 288, and 315 each coordinate Mg(2+). 4 residues coordinate (2R)-2-phosphoglycerate: lysine 340, arginine 369, serine 370, and lysine 391. Residue lysine 340 is the Proton acceptor of the active site.

This sequence belongs to the enolase family. Mg(2+) serves as cofactor.

The protein resides in the cytoplasm. The protein localises to the secreted. It is found in the cell surface. The enzyme catalyses (2R)-2-phosphoglycerate = phosphoenolpyruvate + H2O. It functions in the pathway carbohydrate degradation; glycolysis; pyruvate from D-glyceraldehyde 3-phosphate: step 4/5. Its function is as follows. Catalyzes the reversible conversion of 2-phosphoglycerate (2-PG) into phosphoenolpyruvate (PEP). It is essential for the degradation of carbohydrates via glycolysis. The protein is Enolase of Clostridium botulinum (strain 657 / Type Ba4).